The chain runs to 223 residues: Ribose-5-phosphate isomerase A (223 aa).

Substrate is bound by residues 32–35 (TGST), 85–88 (DGAD), and 98–101 (KGGG). Residue E107 is the Proton acceptor of the active site. A substrate-binding site is contributed by K125.

The protein belongs to the ribose 5-phosphate isomerase family. In terms of assembly, homodimer.

The catalysed reaction is aldehydo-D-ribose 5-phosphate = D-ribulose 5-phosphate. It functions in the pathway carbohydrate degradation; pentose phosphate pathway; D-ribose 5-phosphate from D-ribulose 5-phosphate (non-oxidative stage): step 1/1. Catalyzes the reversible conversion of ribose-5-phosphate to ribulose 5-phosphate. The polypeptide is Ribose-5-phosphate isomerase A (Pseudomonas fluorescens (strain ATCC BAA-477 / NRRL B-23932 / Pf-5)).